A 433-amino-acid polypeptide reads, in one-letter code: MAQFYSAKRRTTTRQIITVSVNDLDSFGQGVARHNGKTLFIPGLLPQENAEVAVTEDKKQYARAKVVRRLSDSPERETPRCPHFGVCGGCQQQHASVDLQQRSKSAALARLMKHDVSEVIADVPWGYRRRARLSLNYLPKTQQLQMGFRKAGSSDIVDVKQCPILAPQLEALLPKVRACLGSLQAMRHLGHVELVQATSGTLMILRHTASLSSADREKLERFSHSEGLDLYLAPDSEILETVSGEMPWYDSNGLRLTFSPRDFIQVNAGVNQKMVARALEWLDVQPEDRVLDLFCGMGNFTLPLATQAASVVGVEGVPALVEKGQQNARLNGLQNVTFYHENLEEDVTKQPWAKNGFDKVLLDPARAGAAGVMQQIIKLEPIRIVYVSCNPATLARDSEALLKAGYTIARLAMLDMFPHTGHLESMVLFSRVK.

Positions 10–68 (RTTTRQIITVSVNDLDSFGQGVARHNGKTLFIPGLLPQENAEVAVTEDKKQYARAKVVR) constitute a TRAM domain. 4 residues coordinate [4Fe-4S] cluster: Cys81, Cys87, Cys90, and Cys162. The S-adenosyl-L-methionine site is built by Gln265, Phe294, Asn299, Glu315, Asn342, and Asp363. The active-site Nucleophile is Cys389.

The protein belongs to the class I-like SAM-binding methyltransferase superfamily. RNA M5U methyltransferase family. RlmD subfamily.

The catalysed reaction is uridine(1939) in 23S rRNA + S-adenosyl-L-methionine = 5-methyluridine(1939) in 23S rRNA + S-adenosyl-L-homocysteine + H(+). In terms of biological role, catalyzes the formation of 5-methyl-uridine at position 1939 (m5U1939) in 23S rRNA. This Shigella flexneri serotype 5b (strain 8401) protein is 23S rRNA (uracil(1939)-C(5))-methyltransferase RlmD.